The primary structure comprises 379 residues: L-lactate dehydrogenase (379 aa).

The FMN hydroxy acid dehydrogenase domain occupies M1 to L379. Y24 lines the substrate pocket. Residues S106 and Q127 each coordinate FMN. A substrate-binding site is contributed by Y129. T155 lines the FMN pocket. R164 contributes to the substrate binding site. K251 provides a ligand contact to FMN. Residue H275 is the Proton acceptor of the active site. R278 serves as a coordination point for substrate. D306–R330 lines the FMN pocket.

This sequence belongs to the FMN-dependent alpha-hydroxy acid dehydrogenase family. FMN is required as a cofactor.

It localises to the cell inner membrane. It carries out the reaction (S)-lactate + A = pyruvate + AH2. Functionally, catalyzes the conversion of L-lactate to pyruvate. Is coupled to the respiratory chain. The polypeptide is L-lactate dehydrogenase (Allorhizobium ampelinum (strain ATCC BAA-846 / DSM 112012 / S4) (Agrobacterium vitis (strain S4))).